A 240-amino-acid polypeptide reads, in one-letter code: tRNA (guanine-N(7)-)-methyltransferase (240 aa).

The tract at residues 1 to 20 (MTESHDTPITPDGEARPHRR) is disordered. Positions 70, 95, 122, and 145 each coordinate S-adenosyl-L-methionine. Residue aspartate 145 is part of the active site. Residues lysine 149, aspartate 181, and 218 to 221 (TKFE) each bind substrate.

The protein belongs to the class I-like SAM-binding methyltransferase superfamily. TrmB family.

It carries out the reaction guanosine(46) in tRNA + S-adenosyl-L-methionine = N(7)-methylguanosine(46) in tRNA + S-adenosyl-L-homocysteine. Its pathway is tRNA modification; N(7)-methylguanine-tRNA biosynthesis. In terms of biological role, catalyzes the formation of N(7)-methylguanine at position 46 (m7G46) in tRNA. In Pseudomonas putida (strain ATCC 47054 / DSM 6125 / CFBP 8728 / NCIMB 11950 / KT2440), this protein is tRNA (guanine-N(7)-)-methyltransferase.